The sequence spans 267 residues: Putative carbamate hydrolase RutD (267 aa).

One can recognise an AB hydrolase-1 domain in the interval 14 to 115 (PTLVLSAGLG…EKLVVVNGWP (102 aa)).

It belongs to the AB hydrolase superfamily. Hydrolase RutD family.

The catalysed reaction is carbamate + 2 H(+) = NH4(+) + CO2. Its function is as follows. Involved in pyrimidine catabolism. May facilitate the hydrolysis of carbamate, a reaction that can also occur spontaneously. The protein is Putative carbamate hydrolase RutD of Serratia proteamaculans (strain 568).